We begin with the raw amino-acid sequence, 384 residues long: Dual-specificity RNA methyltransferase RlmN (384 aa).

Residue Glu-105 is the Proton acceptor of the active site. Residues 111-350 enclose the Radical SAM core domain; sequence EDDRATLCVS…TIVRKTRGDD (240 aa). An intrachain disulfide couples Cys-118 to Cys-355. Residues Cys-125, Cys-129, and Cys-132 each contribute to the [4Fe-4S] cluster site. S-adenosyl-L-methionine contacts are provided by residues 179–180, Ser-211, 233–235, and Asn-312; these read GE and SLH. Cys-355 (S-methylcysteine intermediate) is an active-site residue.

This sequence belongs to the radical SAM superfamily. RlmN family. [4Fe-4S] cluster serves as cofactor.

The protein resides in the cytoplasm. The enzyme catalyses adenosine(2503) in 23S rRNA + 2 reduced [2Fe-2S]-[ferredoxin] + 2 S-adenosyl-L-methionine = 2-methyladenosine(2503) in 23S rRNA + 5'-deoxyadenosine + L-methionine + 2 oxidized [2Fe-2S]-[ferredoxin] + S-adenosyl-L-homocysteine. It carries out the reaction adenosine(37) in tRNA + 2 reduced [2Fe-2S]-[ferredoxin] + 2 S-adenosyl-L-methionine = 2-methyladenosine(37) in tRNA + 5'-deoxyadenosine + L-methionine + 2 oxidized [2Fe-2S]-[ferredoxin] + S-adenosyl-L-homocysteine. Functionally, specifically methylates position 2 of adenine 2503 in 23S rRNA and position 2 of adenine 37 in tRNAs. m2A2503 modification seems to play a crucial role in the proofreading step occurring at the peptidyl transferase center and thus would serve to optimize ribosomal fidelity. The chain is Dual-specificity RNA methyltransferase RlmN from Escherichia coli O157:H7.